The chain runs to 445 residues: Putative aldehyde dehydrogenase AldX (445 aa).

Catalysis depends on residues Glu214 and Cys248.

Belongs to the aldehyde dehydrogenase family.

The enzyme catalyses an aldehyde + NAD(+) + H2O = a carboxylate + NADH + 2 H(+). This Bacillus subtilis (strain 168) protein is Putative aldehyde dehydrogenase AldX (aldX).